Consider the following 423-residue polypeptide: Enolase (423 aa).

Residue Gln166 participates in (2R)-2-phosphoglycerate binding. The Proton donor role is filled by Glu208. 3 residues coordinate Mg(2+): Asp242, Glu283, and Asp310. 4 residues coordinate (2R)-2-phosphoglycerate: Lys335, Arg364, Ser365, and Lys386. Catalysis depends on Lys335, which acts as the Proton acceptor.

This sequence belongs to the enolase family. The cofactor is Mg(2+).

Its subcellular location is the cytoplasm. It is found in the secreted. The protein localises to the cell surface. It carries out the reaction (2R)-2-phosphoglycerate = phosphoenolpyruvate + H2O. The protein operates within carbohydrate degradation; glycolysis; pyruvate from D-glyceraldehyde 3-phosphate: step 4/5. Its function is as follows. Catalyzes the reversible conversion of 2-phosphoglycerate (2-PG) into phosphoenolpyruvate (PEP). It is essential for the degradation of carbohydrates via glycolysis. The protein is Enolase of Elusimicrobium minutum (strain Pei191).